The following is a 447-amino-acid chain: UPF0210 protein LAF_0976 (447 aa).

Belongs to the UPF0210 family. In terms of assembly, homodimer.

The chain is UPF0210 protein LAF_0976 from Limosilactobacillus fermentum (strain NBRC 3956 / LMG 18251) (Lactobacillus fermentum).